We begin with the raw amino-acid sequence, 1072 residues long: DNA-directed RNA polymerase subunit beta (1072 aa).

It belongs to the RNA polymerase beta chain family. As to quaternary structure, in plastids the minimal PEP RNA polymerase catalytic core is composed of four subunits: alpha, beta, beta', and beta''. When a (nuclear-encoded) sigma factor is associated with the core the holoenzyme is formed, which can initiate transcription.

The protein resides in the plastid. The protein localises to the chloroplast. The catalysed reaction is RNA(n) + a ribonucleoside 5'-triphosphate = RNA(n+1) + diphosphate. Its function is as follows. DNA-dependent RNA polymerase catalyzes the transcription of DNA into RNA using the four ribonucleoside triphosphates as substrates. This chain is DNA-directed RNA polymerase subunit beta, found in Oenothera elata subsp. hookeri (Hooker's evening primrose).